The sequence spans 337 residues: DNA-directed RNA polymerase subunit alpha (337 aa).

The alpha N-terminal domain (alpha-NTD) stretch occupies residues 1-233 (MVREEVAGST…DLFLPFLHTE (233 aa)). Positions 267–337 (IPLNCIFIDQ…LPMDLPKNKF (71 aa)) are alpha C-terminal domain (alpha-CTD).

Belongs to the RNA polymerase alpha chain family. As to quaternary structure, in plastids the minimal PEP RNA polymerase catalytic core is composed of four subunits: alpha, beta, beta', and beta''. When a (nuclear-encoded) sigma factor is associated with the core the holoenzyme is formed, which can initiate transcription.

It is found in the plastid. Its subcellular location is the chloroplast. The catalysed reaction is RNA(n) + a ribonucleoside 5'-triphosphate = RNA(n+1) + diphosphate. DNA-dependent RNA polymerase catalyzes the transcription of DNA into RNA using the four ribonucleoside triphosphates as substrates. The polypeptide is DNA-directed RNA polymerase subunit alpha (Oryza nivara (Indian wild rice)).